The chain runs to 316 residues: Ribosomal protein L11 methyltransferase (316 aa).

S-adenosyl-L-methionine contacts are provided by threonine 157, glycine 178, aspartate 200, and asparagine 243.

Belongs to the methyltransferase superfamily. PrmA family.

The protein localises to the cytoplasm. It catalyses the reaction L-lysyl-[protein] + 3 S-adenosyl-L-methionine = N(6),N(6),N(6)-trimethyl-L-lysyl-[protein] + 3 S-adenosyl-L-homocysteine + 3 H(+). Functionally, methylates ribosomal protein L11. The polypeptide is Ribosomal protein L11 methyltransferase (Streptococcus pneumoniae serotype 2 (strain D39 / NCTC 7466)).